We begin with the raw amino-acid sequence, 180 residues long: Large ribosomal subunit protein uL5 (180 aa).

It belongs to the universal ribosomal protein uL5 family. As to quaternary structure, part of the 50S ribosomal subunit; part of the 5S rRNA/L5/L18/L25 subcomplex. Contacts the 5S rRNA and the P site tRNA. Forms a bridge to the 30S subunit in the 70S ribosome.

In terms of biological role, this is one of the proteins that bind and probably mediate the attachment of the 5S RNA into the large ribosomal subunit, where it forms part of the central protuberance. In the 70S ribosome it contacts protein S13 of the 30S subunit (bridge B1b), connecting the 2 subunits; this bridge is implicated in subunit movement. Contacts the P site tRNA; the 5S rRNA and some of its associated proteins might help stabilize positioning of ribosome-bound tRNAs. This chain is Large ribosomal subunit protein uL5, found in Ruminiclostridium cellulolyticum (strain ATCC 35319 / DSM 5812 / JCM 6584 / H10) (Clostridium cellulolyticum).